The chain runs to 594 residues: Segmentation polarity homeobox protein engrailed (594 aa).

7 disordered regions span residues 1-64 (MALE…TRDE), 76-127 (IKQE…PASI), 141-164 (KATA…ISPG), 198-217 (HYYQ…PQRA), 231-299 (ISKS…PTGS), 387-458 (AGTG…GSEN), and 474-501 (DRPS…RPRT). The span at 22-60 (SQSPTSTTTVTMATASPVPACTTTTTTTSTSGASAASSP) shows a compositional bias: low complexity. Residues 92–112 (PHHHQHPHHHQLPHHPHHQHH) are compositionally biased toward basic residues. The span at 151–164 (HPQPPAIREPISPG) shows a compositional bias: pro residues. Positions 237–247 (LCSSNGSSSAT) are enriched in polar residues. Low complexity-rich tracts occupy residues 278–299 (ASPS…PTGS) and 387–402 (AGTG…ANGA). Polar residues-rich tracts occupy residues 426 to 436 (SSETNGSSSQD) and 448 to 458 (ETSSTKDGSEN). Basic and acidic residues predominate over residues 487–499 (QPKEKGDSEEKRP). The segment at residues 496–555 (EKRPRTAFSNAQLQRLKNEFNENRYLTEKRRQTLSAELGLNEAQIKIWFQNKRAKIKKSS) is a DNA-binding region (homeobox).

The protein belongs to the engrailed homeobox family.

It is found in the nucleus. This protein specifies the body segmentation pattern. It is required for the development of the central nervous system. Transcriptional regulator that repress activated promoters. The sequence is that of Segmentation polarity homeobox protein engrailed (en) from Anopheles gambiae (African malaria mosquito).